The sequence spans 173 residues: Probable xanthine dehydrogenase subunit E (173 aa).

Positions 14 to 90 (EQFRMTVNGQ…GHSITTIEGL (77 aa)) constitute a 2Fe-2S ferredoxin-type domain. Positions 52, 57, 60, 72, 110, 113, 145, and 147 each coordinate [2Fe-2S] cluster.

As to quaternary structure, could be composed of four subunits: PucA, PucC, PucD and PucE. Requires [2Fe-2S] cluster as cofactor.

The enzyme catalyses xanthine + NAD(+) + H2O = urate + NADH + H(+). The catalysed reaction is hypoxanthine + NAD(+) + H2O = xanthine + NADH + H(+). The protein operates within purine metabolism; hypoxanthine degradation; urate from hypoxanthine: step 1/2. It functions in the pathway purine metabolism; hypoxanthine degradation; urate from hypoxanthine: step 2/2. In terms of biological role, oxidizes hypoxanthine and xanthine to uric acid. This chain is Probable xanthine dehydrogenase subunit E (pucE), found in Bacillus subtilis (strain 168).